A 94-amino-acid chain; its full sequence is Large ribosomal subunit protein uL23 (94 aa).

Belongs to the universal ribosomal protein uL23 family. As to quaternary structure, part of the 50S ribosomal subunit. Contacts protein L29, and trigger factor when it is bound to the ribosome.

One of the early assembly proteins it binds 23S rRNA. One of the proteins that surrounds the polypeptide exit tunnel on the outside of the ribosome. Forms the main docking site for trigger factor binding to the ribosome. This chain is Large ribosomal subunit protein uL23, found in Pelobacter propionicus (strain DSM 2379 / NBRC 103807 / OttBd1).